A 373-amino-acid chain; its full sequence is Glutamate 5-kinase (373 aa).

Lys15 provides a ligand contact to ATP. Residues Ser56, Asp143, and Asn155 each coordinate substrate. Residue 175–176 (SD) coordinates ATP. In terms of domain architecture, PUA spans 281-358 (KGTLTIDAGA…PDVMTILGIS (78 aa)).

It belongs to the glutamate 5-kinase family.

The protein resides in the cytoplasm. The enzyme catalyses L-glutamate + ATP = L-glutamyl 5-phosphate + ADP. It functions in the pathway amino-acid biosynthesis; L-proline biosynthesis; L-glutamate 5-semialdehyde from L-glutamate: step 1/2. In terms of biological role, catalyzes the transfer of a phosphate group to glutamate to form L-glutamate 5-phosphate. The sequence is that of Glutamate 5-kinase from Bradyrhizobium diazoefficiens (strain JCM 10833 / BCRC 13528 / IAM 13628 / NBRC 14792 / USDA 110).